The sequence spans 1412 residues: DNA-directed RNA polymerase subunit beta (1412 aa).

This sequence belongs to the RNA polymerase beta chain family. The RNAP catalytic core consists of 2 alpha, 1 beta, 1 beta' and 1 omega subunit. When a sigma factor is associated with the core the holoenzyme is formed, which can initiate transcription.

It catalyses the reaction RNA(n) + a ribonucleoside 5'-triphosphate = RNA(n+1) + diphosphate. DNA-dependent RNA polymerase catalyzes the transcription of DNA into RNA using the four ribonucleoside triphosphates as substrates. This chain is DNA-directed RNA polymerase subunit beta, found in Bdellovibrio bacteriovorus (strain ATCC 15356 / DSM 50701 / NCIMB 9529 / HD100).